A 603-amino-acid polypeptide reads, in one-letter code: DNA mismatch repair protein MutL (603 aa).

The interval 361–383 (KETPTLFSKPTIPEYVPSDEDAP) is disordered.

This sequence belongs to the DNA mismatch repair MutL/HexB family.

This protein is involved in the repair of mismatches in DNA. It is required for dam-dependent methyl-directed DNA mismatch repair. May act as a 'molecular matchmaker', a protein that promotes the formation of a stable complex between two or more DNA-binding proteins in an ATP-dependent manner without itself being part of a final effector complex. This is DNA mismatch repair protein MutL from Listeria monocytogenes serotype 4b (strain CLIP80459).